Here is a 1025-residue protein sequence, read N- to C-terminus: Multidrug resistance protein MdtC (1025 aa).

12 helical membrane passes run 3–23 (FFAL…AITL), 333–353 (EVEQ…FLFL), 360–380 (IIPA…MYLC), 387–407 (LSLM…IVVL), 431–451 (VGFT…PLLL), 463–483 (FAVT…TLTP), 528–548 (LVGV…ISIP), 853–873 (VILI…LYES), 875–895 (VHPL…LLAL), 897–917 (LFNA…IGIV), 953–973 (PIMM…LSGG), and 984–1004 (ITIV…TPVV).

This sequence belongs to the resistance-nodulation-cell division (RND) (TC 2.A.6) family. MdtC subfamily. Part of a tripartite efflux system composed of MdtA, MdtB and MdtC. MdtC forms a heteromultimer with MdtB.

It localises to the cell inner membrane. Functionally, the MdtABC tripartite complex confers resistance against novobiocin and deoxycholate. The sequence is that of Multidrug resistance protein MdtC from Escherichia coli O17:K52:H18 (strain UMN026 / ExPEC).